The sequence spans 75 residues: Sec-independent protein translocase protein TatA (75 aa).

The helical transmembrane segment at 1–21 (MGSFSIWHWLIVLVIVVLVFG) threads the bilayer. Basic and acidic residues-rich tracts occupy residues 43–54 (MRDSEKSGEDVQ) and 66–75 (ATDKSHTVSH). Residues 43–75 (MRDSEKSGEDVQQKIGGDTLDAQATDKSHTVSH) are disordered.

This sequence belongs to the TatA/E family. The Tat system comprises two distinct complexes: a TatABC complex, containing multiple copies of TatA, TatB and TatC subunits, and a separate TatA complex, containing only TatA subunits. Substrates initially bind to the TatABC complex, which probably triggers association of the separate TatA complex to form the active translocon.

Its subcellular location is the cell inner membrane. Part of the twin-arginine translocation (Tat) system that transports large folded proteins containing a characteristic twin-arginine motif in their signal peptide across membranes. TatA could form the protein-conducting channel of the Tat system. The protein is Sec-independent protein translocase protein TatA of Aromatoleum aromaticum (strain DSM 19018 / LMG 30748 / EbN1) (Azoarcus sp. (strain EbN1)).